The chain runs to 77 residues: Cell division topological specificity factor (77 aa).

The protein belongs to the MinE family.

Functionally, prevents the cell division inhibition by proteins MinC and MinD at internal division sites while permitting inhibition at polar sites. This ensures cell division at the proper site by restricting the formation of a division septum at the midpoint of the long axis of the cell. In Helicobacter pylori (strain Shi470), this protein is Cell division topological specificity factor.